The chain runs to 412 residues: Circumsporozoite protein (412 aa).

The first 18 residues, 1–18 (MMRKLAILSVSSFLFVEA), serve as a signal peptide directing secretion. The tract at residues 69–328 (SRSLGENDDG…KNNNNEEPSD (260 aa)) is disordered. Residues 85–105 (NGREGKDEDKRDGNNEDNEKL) show a composition bias toward basic and acidic residues. The segment at 104 to 111 (KLRKPKHK) is required for the binding to heparan sulfate proteoglycans (HSPGs) on the surface of host hepatocytes. Residues 112-116 (KLKQP) are region I; contains the proteolytic cleavage site. Positions 120–288 (NPDPNANPNV…PNANPNANPN (169 aa)) are enriched in low complexity. 41 consecutive repeat copies span residues 123-126 (PNAN), 127-130 (PNVD), 131-134 (PNAN), 135-138 (PNVD), 139-142 (PNAN), 143-146 (PNVD), 147-150 (PNAN), 151-154 (PNAN), 155-158 (PNAN), 159-162 (PNAN), 163-166 (PNAN), 167-170 (PNAN), 171-174 (PNAN), 175-178 (PNAN), 179-182 (PNAN), 183-186 (PNAN), 187-190 (PNAN), 191-194 (PNAN), 195-198 (PNAN), 199-202 (PNAN), 203-206 (PNAN), 207-210 (PNVD), 211-214 (PNAN), 215-218 (PNAN), 219-222 (PNAN), 223-226 (PNAN), 227-230 (PNAN), 231-234 (PNAN), 235-238 (PNAN), 239-242 (PNAN), 243-246 (PNAN), 247-250 (PNAN), 251-254 (PNAN), 255-258 (PNAN), 259-262 (PNAN), 263-266 (PNAN), 267-270 (PNAN), 271-274 (PNAN), 275-278 (PNAN), 279-282 (PNAN), and 283-286 (PNAN). The interval 123–286 (PNANPNVDPN…ANPNANPNAN (164 aa)) is 41 X 4 AA tandem repeats of P-N-[AV]-[ND]. Residues 289 to 304 (KNNQGNGQGHNMPNDP) are compositionally biased toward polar residues. Over residues 310–324 (ENANANNAVKNNNNE) the composition is skewed to low complexity. Positions 337-390 (KIKNSISTEWSPCSVTCGNGIQVRIKPGSANKPKDELDYENDIEKKICKMEKCS) constitute a TSP type-1 domain. 2 disulfides stabilise this stretch: cysteine 349–cysteine 384 and cysteine 353–cysteine 389. O-linked (Fuc) threonine glycosylation occurs at threonine 352. The GPI-anchor amidated cysteine moiety is linked to residue cysteine 389. A propeptide spans 390–412 (SSVFNVVNSSIGLIMVLSFLFLN) (removed in mature form).

Belongs to the plasmodium circumsporozoite protein family. In terms of processing, during host cell invasion, proteolytically cleaved at the cell membrane in the region I by a papain-like cysteine protease of parasite origin. Cleavage is triggered by the sporozoite contact with highly sulfated heparan sulfate proteoglycans (HSPGs) present on the host hepatocyte cell surface. Cleavage exposes the TSP type-1 (TSR) domain and is required for productive invasion of host hepatocytes but not for adhesion to the host cell membrane. Cleavage is dispensable for sporozoite development in the oocyst, motility and for traversal of host and vector cells. O-glycosylated; maybe by POFUT2.

It localises to the cell membrane. The protein resides in the cytoplasm. Functionally, essential sporozoite protein. In the mosquito vector, required for sporozoite development in the oocyst, migration through the vector hemolymph and entry into the vector salivary glands. In the vertebrate host, required for sporozoite migration through the host dermis and infection of host hepatocytes. Binds to highly sulfated heparan sulfate proteoglycans (HSPGs) on the surface of host hepatocytes. In the vertebrate host, binds to highly sulfated heparan sulfate proteoglycans (HSPGs) on the surface of host hepatocytes and is required for sporozoite invasion of the host hepatocytes. The protein is Circumsporozoite protein of Plasmodium falciparum.